A 301-amino-acid polypeptide reads, in one-letter code: Homeobox protein knotted-1-like 1 (301 aa).

The tract at residues Cys-141–Glu-170 is disordered. Residues Ala-144–Thr-153 are compositionally biased toward low complexity. The 21-residue stretch at Glu-188 to Phe-208 folds into the ELK domain. The segment at residues Leu-209–Ser-272 is a DNA-binding region (homeobox; TALE-type).

It belongs to the TALE/KNOX homeobox family.

The protein resides in the nucleus. Probable transcription factor that may be involved in shoot formation during early embryogenesis. This chain is Homeobox protein knotted-1-like 1 (OSH6), found in Oryza sativa subsp. japonica (Rice).